The primary structure comprises 359 residues: Guanine nucleotide-binding protein subunit alpha-11 (359 aa).

Residues Cys-9 and Cys-10 are each lipidated (S-palmitoyl cysteine). Residues 38-359 (RELKLLLLGT…QLNLKEYNLV (322 aa)) enclose the G-alpha domain. The segment at 41–54 (KLLLLGTGESGKST) is G1 motif. Residues 46-53 (GTGESGKS) and 180-183 (LRVR) contribute to the GTP site. Ser-53 serves as a coordination point for Mg(2+). The segment at 178 to 186 (DVLRVRVPT) is G2 motif. Position 186 (Thr-186) interacts with Mg(2+). Residues 201-210 (FRMVDVGGQR) form a G3 motif region. The interval 270-277 (ILFLNKKD) is G4 motif. GTP is bound by residues 274–277 (NKKD) and Ala-331. A G5 motif region spans residues 329-334 (TCATDT).

The protein belongs to the G-alpha family. G(q) subfamily. G proteins are composed of 3 units; alpha, beta and gamma. The alpha chain contains the guanine nucleotide binding site. Interacts with RGS22. Interacts with NTSR1.

It localises to the cell membrane. The protein localises to the cytoplasm. It catalyses the reaction GTP + H2O = GDP + phosphate + H(+). Guanine nucleotide-binding proteins (G proteins) function as transducers downstream of G protein-coupled receptors (GPCRs) in numerous signaling cascades. The alpha chain contains the guanine nucleotide binding site and alternates between an active, GTP-bound state and an inactive, GDP-bound state. Signaling by an activated GPCR promotes GDP release and GTP binding. The alpha subunit has a low GTPase activity that converts bound GTP to GDP, thereby terminating the signal. Both GDP release and GTP hydrolysis are modulated by numerous regulatory proteins. Signaling is mediated via phospholipase C-beta-dependent inositol lipid hydrolysis for signal propagation: activates phospholipase C-beta: following GPCR activation, GNA11 activates PLC-beta (PLCB1, PLCB2, PLCB3 or PLCB4), leading to production of diacylglycerol (DAG) and inositol 1,4,5-trisphosphate (IP3). Transduces FFAR4 signaling in response to long-chain fatty acids (LCFAs). Together with GNAQ, required for heart development. In the respiratory epithelium, transmits OXGR1-dependent signals that lead to downstream intracellular Ca(2+) release and mucocilliary clearance of airborne pathogens. This is Guanine nucleotide-binding protein subunit alpha-11 (Gna11) from Mus musculus (Mouse).